Here is a 562-residue protein sequence, read N- to C-terminus: Sperm-tail PG-rich repeat-containing protein 2 (562 aa).

STPGR repeat units lie at residues 21 to 31 (GPGTYNINRSL), 60 to 73 (SPGP…ITRN), and 96 to 118 (PGPG…AKSP). Disordered stretches follow at residues 114 to 136 (KAKS…APSI) and 192 to 215 (SGRR…QEDQ). A compositionally biased stretch (low complexity) spans 127 to 136 (PSLSPAAPSI). The span at 193-202 (GRREPLKGAD) shows a compositional bias: basic and acidic residues. STPGR repeat units follow at residues 204–227 (PGPG…VKRE), 253–271 (PGPG…SNTH), 336–350 (TPGP…YGLA), 385–409 (TPGP…TAAF), 425–462 (TPPP…SCFL), and 478–492 (TPGP…KSSS). The segment at 543-562 (STRSLSSHRSWRKPTAHSSA) is disordered. The span at 551–562 (RSWRKPTAHSSA) shows a compositional bias: basic residues.

The protein is Sperm-tail PG-rich repeat-containing protein 2 (stpg2) of Danio rerio (Zebrafish).